A 454-amino-acid polypeptide reads, in one-letter code: Chaperone SurA (454 aa).

A signal peptide spans 1–28 (MKISSFRKGRWLGALALFAVVCWSMADA). PpiC domains follow at residues 177–278 (DREY…KMLA) and 287–386 (LTKT…QVLE). The disordered stretch occupies residues 431-454 (LDETPASPGEDAPAGEDSPETFMR). Acidic residues predominate over residues 443–454 (PAGEDSPETFMR).

It is found in the periplasm. The enzyme catalyses [protein]-peptidylproline (omega=180) = [protein]-peptidylproline (omega=0). Its function is as follows. Chaperone involved in the correct folding and assembly of outer membrane proteins. Recognizes specific patterns of aromatic residues and the orientation of their side chains, which are found more frequently in integral outer membrane proteins. May act in both early periplasmic and late outer membrane-associated steps of protein maturation. This Methylococcus capsulatus (strain ATCC 33009 / NCIMB 11132 / Bath) protein is Chaperone SurA.